The sequence spans 196 residues: Putative NADH dehydrogenase/NAD(P)H nitroreductase SGR_2476 (196 aa).

Belongs to the nitroreductase family. HadB/RutE subfamily. FMN serves as cofactor.

The polypeptide is Putative NADH dehydrogenase/NAD(P)H nitroreductase SGR_2476 (Streptomyces griseus subsp. griseus (strain JCM 4626 / CBS 651.72 / NBRC 13350 / KCC S-0626 / ISP 5235)).